Consider the following 348-residue polypeptide: Protein RecA (348 aa).

Glycine 66–threonine 73 provides a ligand contact to ATP.

This sequence belongs to the RecA family.

Its subcellular location is the cytoplasm. Its function is as follows. Can catalyze the hydrolysis of ATP in the presence of single-stranded DNA, the ATP-dependent uptake of single-stranded DNA by duplex DNA, and the ATP-dependent hybridization of homologous single-stranded DNAs. It interacts with LexA causing its activation and leading to its autocatalytic cleavage. This chain is Protein RecA, found in Neisseria meningitidis serogroup A / serotype 4A (strain DSM 15465 / Z2491).